The chain runs to 170 residues: Ergosterol biosynthetic protein 28 (170 aa).

A run of 3 helical transmembrane segments spans residues 7 to 27 (FLPEAKGVLPYYMIILSIISI), 116 to 136 (TLAYWTYIVAFSHFASELFVF), and 141 to 161 (FGLPQYFPFALASTSLIWMPL).

The protein belongs to the ERG28 family. As to quaternary structure, heterotetramer of ERG25, ERG26, ERG27 and ERG28. ERG28 acts as a scaffold to tether ERG27 and other 4,4-demethylation-related enzymes, forming a demethylation enzyme complex, in the endoplasmic reticulum.

It is found in the endoplasmic reticulum membrane. Its pathway is steroid metabolism; ergosterol biosynthesis. Sterol 24-C-methyltransferase; part of the third module of ergosterol biosynthesis pathway that includes the late steps of the pathway. ERG28 has a role as a scaffold to help anchor the catalytic components of the C-4 demethylation complex ERG25, ERG26 and ERG27 to the endoplasmic reticulum. The third module or late pathway involves the ergosterol synthesis itself through consecutive reactions that mainly occur in the endoplasmic reticulum (ER) membrane. Firstly, the squalene synthase ERG9 catalyzes the condensation of 2 farnesyl pyrophosphate moieties to form squalene, which is the precursor of all steroids. Squalene synthase is crucial for balancing the incorporation of farnesyl diphosphate (FPP) into sterol and nonsterol isoprene synthesis. Secondly, squalene is converted into lanosterol by the consecutive action of the squalene epoxidase ERG1 and the lanosterol synthase ERG7. Then, the delta(24)-sterol C-methyltransferase ERG6 methylates lanosterol at C-24 to produce eburicol. Eburicol is the substrate of the sterol 14-alpha demethylase encoded by CYP51A, CYP51B and CYP51C, to yield 4,4,24-trimethyl ergosta-8,14,24(28)-trienol. CYP51B encodes the enzyme primarily responsible for sterol 14-alpha-demethylation, and plays an essential role in ascospore formation. CYP51A encodes an additional sterol 14-alpha-demethylase, induced on ergosterol depletion and responsible for the intrinsic variation in azole sensitivity. The third CYP51 isoform, CYP51C, does not encode a sterol 14-alpha-demethylase, but is required for full virulence on host wheat ears. The C-14 reductase ERG24 then reduces the C14=C15 double bond which leads to 4,4-dimethylfecosterol. A sequence of further demethylations at C-4, involving the C-4 demethylation complex containing the C-4 methylsterol oxidases ERG25, the sterol-4-alpha-carboxylate 3-dehydrogenase ERG26 and the 3-keto-steroid reductase ERG27, leads to the production of fecosterol via 4-methylfecosterol. ERG28 has a role as a scaffold to help anchor ERG25, ERG26 and ERG27 to the endoplasmic reticulum. The C-8 sterol isomerase ERG2 then catalyzes the reaction which results in unsaturation at C-7 in the B ring of sterols and thus converts fecosterol to episterol. The sterol-C5-desaturases ERG3A and ERG3BB then catalyze the introduction of a C-5 double bond in the B ring to produce 5-dehydroepisterol. The C-22 sterol desaturases ERG5A and ERG5B further convert 5-dehydroepisterol into ergosta-5,7,22,24(28)-tetraen-3beta-ol by forming the C-22(23) double bond in the sterol side chain. Finally, ergosta-5,7,22,24(28)-tetraen-3beta-ol is substrate of the C-24(28) sterol reductase ERG4 to produce ergosterol. The chain is Ergosterol biosynthetic protein 28 from Gibberella zeae (strain ATCC MYA-4620 / CBS 123657 / FGSC 9075 / NRRL 31084 / PH-1) (Wheat head blight fungus).